The following is a 370-amino-acid chain: Nociceptin receptor (370 aa).

The Extracellular portion of the chain corresponds to 1 to 48 (MESLFPAPFWEVLYGSPLQGNLSLLSPNHSLLPPHLLLNASHGAFLPL). N-linked (GlcNAc...) asparagine glycans are attached at residues N21, N28, and N39. A helical membrane pass occupies residues 49 to 74 (GLKVTIVGLYLAVCVGGLLGNCLVMY). Over 75-87 (VILRHTKMKTATN) the chain is Cytoplasmic. The chain crosses the membrane as a helical span at residues 88–109 (IYIFNLALADTAVLLTLPFQGT). At 110-124 (DVLLGFWPFGNALCK) the chain is on the extracellular side. C123 and C200 are disulfide-bonded. The chain crosses the membrane as a helical span at residues 125–146 (AVIAIDYYNMFTSAFTLTAMSV). The Cytoplasmic portion of the chain corresponds to 147–165 (DRYVAICHPIRALDVRTSS). The chain crosses the membrane as a helical span at residues 166–188 (KAQAVNVAIWALASIVGVPVAIM). The Extracellular segment spans residues 189 to 211 (GSAQVEDEEIECLVEIPAPQDYW). Residues 212-236 (GPVFAVCIFLFSFVIPVLIISVCYS) form a helical membrane-spanning segment. The Cytoplasmic portion of the chain corresponds to 237–264 (LMVRRLRGVRLLSGSREKDRNLRRITRL). The chain crosses the membrane as a helical span at residues 265–285 (VLVVVAVFVGCWTPVQVFVLV). Over 286–300 (QGLGVQPGSETAVAV) the chain is Extracellular. Residues 301–322 (LRFCTALGYVNSCLNPILYAFL) form a helical membrane-spanning segment. At 323 to 370 (DENFKACFRKFCCAPTRRREMQVSDRVRSIAKDVALACKTSETVPRPA) the chain is on the cytoplasmic side. A lipid anchor (S-palmitoyl cysteine) is attached at C334.

The protein belongs to the G-protein coupled receptor 1 family. Phosphorylation at Ser-363 requires GRK3. As to expression, detected in brain cortex, stomach, ileum, jejunum and colon.

The protein localises to the cell membrane. It is found in the cytoplasmic vesicle. In terms of biological role, G-protein coupled opioid receptor that functions as a receptor for the endogenous neuropeptide nociceptin. Ligand binding causes a conformation change that triggers signaling via guanine nucleotide-binding proteins (G proteins) and modulates the activity of down-stream effectors. Signaling via G proteins mediates inhibition of adenylate cyclase activity and calcium channel activity. Arrestins modulate signaling via G proteins and mediate the activation of alternative signaling pathways that lead to the activation of MAP kinases. Plays a role in modulating nociception and the perception of pain. Plays a role in the regulation of locomotor activity by the neuropeptide nociceptin. In Sus scrofa (Pig), this protein is Nociceptin receptor (OPRL1).